The primary structure comprises 414 residues: Transforming growth factor beta-2 proprotein (414 aa).

Residues 1 to 20 (MHYCVLSTFLLLHLVPVALS) form the signal peptide. 3 N-linked (GlcNAc...) asparagine glycosylation sites follow: Asn72, Asn140, and Asn241. 4 cysteine pairs are disulfide-bonded: Cys309-Cys318, Cys317-Cys380, Cys346-Cys411, and Cys350-Cys413.

The protein belongs to the TGF-beta family. As to quaternary structure, interacts with the serine proteases, HTRA1 and HTRA3. Interacts with ASPN. Interacts with MFAP5. Interacts with Transforming growth factor beta-2 (TGF-beta-2) chain; interaction is non-covalent and maintains (TGF-beta-2) in a latent state. Interacts with LRRC32/GARP; leading to regulate activation of TGF-beta-2. Interacts with NREP; the interaction results in a decrease in TGFB2 autoinduction. In terms of assembly, transforming growth factor beta-2: Homodimer; disulfide-linked. Transforming growth factor beta-2: Interacts with TGF-beta receptors (TGFBR1 and TGFBR2), leading to signal transduction. The precursor proprotein is cleaved in the Golgi apparatus to form Transforming growth factor beta-2 (TGF-beta-2) and Latency-associated peptide (LAP) chains, which remain non-covalently linked, rendering TGF-beta-2 inactive.

Its subcellular location is the secreted. The protein localises to the extracellular space. The protein resides in the extracellular matrix. Its function is as follows. Precursor of the Latency-associated peptide (LAP) and Transforming growth factor beta-2 (TGF-beta-2) chains, which constitute the regulatory and active subunit of TGF-beta-2, respectively. In terms of biological role, required to maintain the Transforming growth factor beta-2 (TGF-beta-2) chain in a latent state during storage in extracellular matrix. Associates non-covalently with TGF-beta-2 and regulates its activation via interaction with 'milieu molecules', such as LTBP1 and LRRC32/GARP, that control activation of TGF-beta-2. Multifunctional protein that regulates various processes such as angiogenesis and heart development. Activation into mature form follows different steps: following cleavage of the proprotein in the Golgi apparatus, Latency-associated peptide (LAP) and Transforming growth factor beta-2 (TGF-beta-2) chains remain non-covalently linked rendering TGF-beta-2 inactive during storage in extracellular matrix. At the same time, LAP chain interacts with 'milieu molecules', such as LTBP1 and LRRC32/GARP, that control activation of TGF-beta-2 and maintain it in a latent state during storage in extracellular milieus. Once activated following release of LAP, TGF-beta-2 acts by binding to TGF-beta receptors (TGFBR1 and TGFBR2), which transduce signal. In Mus musculus (Mouse), this protein is Transforming growth factor beta-2 proprotein (Tgfb2).